A 350-amino-acid chain; its full sequence is MIVPIELAHTKNITYDITIDALPQLTFDTKVAVVTNPTVAGYHLQTLLAHIKAPQLEVITVPDGEEYKTLETVETILNELFEHKFDRKSLLIAFGGGVIGDMTGFTASLYQRGIDFIQIPTTLLSQVDASVGGKTGVNNRYGKNLIGAFYQPKAVYIDPAFLKTLPSREFSAGVAEIIKMAVMFDKDYFEFLVTADLSDEEVLKETIRRSVELKAWVVNQDEKEAGIRAVLNYGHTFGHVVENETGYTTYLHGEAVAIGMVMANALAVELGLLGETEADRIKALLEKASLPTHYTIKDVDDFYEHFFLDKKSANNSIKFILPEGIGGHKIVSDIDESVVKNVLKKFEEEV.

NAD(+)-binding positions include 63 to 68 (DGEEYK), 97 to 101 (GVIGD), 121 to 122 (TT), lysine 134, lysine 143, and 161 to 164 (FLKT). Zn(2+) is bound by residues glutamate 176, histidine 235, and histidine 252.

It belongs to the sugar phosphate cyclases superfamily. Dehydroquinate synthase family. It depends on Co(2+) as a cofactor. Zn(2+) is required as a cofactor. The cofactor is NAD(+).

The protein resides in the cytoplasm. It catalyses the reaction 7-phospho-2-dehydro-3-deoxy-D-arabino-heptonate = 3-dehydroquinate + phosphate. Its pathway is metabolic intermediate biosynthesis; chorismate biosynthesis; chorismate from D-erythrose 4-phosphate and phosphoenolpyruvate: step 2/7. Functionally, catalyzes the conversion of 3-deoxy-D-arabino-heptulosonate 7-phosphate (DAHP) to dehydroquinate (DHQ). In Sulfurovum sp. (strain NBC37-1), this protein is 3-dehydroquinate synthase.